The following is an 880-amino-acid chain: Replication origin-binding protein (880 aa).

The Helicase ATP-binding domain occupies 60–225; it reads PLPIRTKPVL…AELRGAENVH (166 aa). Residue 73–80 participates in ATP binding; it reads APMGSGKT. Residues 260-287 form a disordered region; that stretch reads PPAGDESREASASQPPPHDSSNEPCAPE.

The protein belongs to the herpesviridae OriBP family. In terms of assembly, homodimer. Interacts with the major DNA-binding protein. Interacts with the DNA helicase/primase complex-associated protein and the polymerase accessory protein.

It is found in the host nucleus. In terms of biological role, functions as a docking protein to recruit essential components of the viral replication machinery to viral DNA origins. In the presence of the major DNA-binding protein, opens dsDNA leading to a conformational change in the origin that facilitates DNA unwinding and subsequent replication. The chain is Replication origin-binding protein (UL9) from Psittacid herpesvirus 1 (isolate Amazon parrot/-/97-0001/1997) (PsHV-1).